The following is a 327-amino-acid chain: Acyl-CoA desaturase (327 aa).

At 1 to 39 (MPDREIKSPIWHPEPGTVEDVFDHTYKEKEGPKPPTVIV) the chain is on the cytoplasmic side. Residues 40–60 (WRNVILMSLLHLGALYGLFLF) traverse the membrane as a helical segment. Asn-42 contributes to the substrate binding site. At 61–64 (PSAR) the chain is on the lumenal side. Residues 65–85 (ALTWIWFFGCLLFSALGITAG) form a helical membrane-spanning segment. Residues 86–184 (AHRLWSHRSY…DKVVMFQRRF (99 aa)) are Cytoplasmic-facing. Residues His-87 and His-92 each contribute to the Fe cation site. Residues 87 to 92 (HRLWSH) carry the Histidine box-1 motif. 3 residues coordinate substrate: Asn-115, Arg-122, and Asp-123. The Fe cation site is built by His-124, His-127, and His-128. Residues 124 to 128 (HRVHH) carry the Histidine box-2 motif. Substrate is bound by residues Arg-155 and Lys-156. Residues 185–204 (YKPSVLLMCFFVPTFVPWYV) traverse the membrane as a helical segment. Residues 205 to 208 (WGES) are Lumenal-facing. Residues 209-230 (LWVAYFVPALLRYALVLNATWL) traverse the membrane as a helical segment. Trp-229 serves as a coordination point for substrate. The Cytoplasmic portion of the chain corresponds to 231–327 (VNSAAHMWGN…RTGDGSHWSG (97 aa)). Positions 236, 265, 268, and 269 each coordinate Fe cation. A Histidine box-3 motif is present at residues 265–269 (HNYHH).

Belongs to the fatty acid desaturase type 1 family. The cofactor is Fe(2+).

Its subcellular location is the endoplasmic reticulum membrane. The enzyme catalyses octadecanoyl-CoA + 2 Fe(II)-[cytochrome b5] + O2 + 2 H(+) = (9Z)-octadecenoyl-CoA + 2 Fe(III)-[cytochrome b5] + 2 H2O. Functionally, stearoyl-CoA desaturase that utilizes O(2) and electrons from reduced cytochrome b5 to introduce the first double bond into saturated fatty acyl-CoA substrates. Has high specificity and catalyzes the insertion of a cis double bond at the delta-9 position into fatty acyl-CoA substrates including palmitoyl-CoA and stearoyl-CoA. Contributes to the biosynthesis of membrane phospholipids, cholesterol esters and triglycerides. The chain is Acyl-CoA desaturase from Cyprinus carpio (Common carp).